Consider the following 140-residue polypeptide: Profilin (140 aa).

At Ser2 the chain carries N-acetylserine.

It belongs to the profilin family. In terms of assembly, occurs in many kinds of cells as a complex with monomeric actin in a 1:1 ratio.

The protein localises to the cytoplasm. The protein resides in the cytoskeleton. Functionally, binds to actin and affects the structure of the cytoskeleton. At high concentrations, profilin prevents the polymerization of actin, whereas it enhances it at low concentrations. By binding to PIP2, it inhibits the formation of IP3 and DG. The chain is Profilin from Clypeaster japonicus (Sand dollar).